The chain runs to 213 residues: Ribulose-phosphate 3-epimerase (213 aa).

A substrate-binding site is contributed by serine 9. A divalent metal cation is bound by residues histidine 34, aspartate 36, and histidine 66. The active-site Proton acceptor is aspartate 36. Substrate contacts are provided by residues histidine 66, 139 to 142, 166 to 168, and 186 to 187; these read GFGG, DGG, and GS. Aspartate 166 is an a divalent metal cation binding site. The Proton donor role is filled by aspartate 166.

Belongs to the ribulose-phosphate 3-epimerase family. Requires Co(2+) as cofactor. Fe(2+) is required as a cofactor. Mn(2+) serves as cofactor. The cofactor is Zn(2+).

It catalyses the reaction D-ribulose 5-phosphate = D-xylulose 5-phosphate. The protein operates within carbohydrate degradation; pentose phosphate pathway; D-xylulose 5-phosphate from D-ribulose 5-phosphate (non-oxidative stage): step 1/1. Functionally, catalyzes the reversible epimerization of D-ribulose 5-phosphate to D-xylulose 5-phosphate. The protein is Ribulose-phosphate 3-epimerase (RPE1) of Encephalitozoon cuniculi (strain GB-M1) (Microsporidian parasite).